Reading from the N-terminus, the 203-residue chain is Sporulation delaying protein C (203 aa).

The first 32 residues, 1 to 32 (MKSKLLRLLIVSMVTILVFSLVGLSKESSTSA), serve as a signal peptide directing secretion. Positions 33 to 140 (KENHTFSGED…KYSSNKVTPS (108 aa)) are cleaved as a propeptide — removed in mature form. The cysteines at positions 141 and 147 are disulfide-linked. The propeptide at 183–203 (SASNNSDLEAAAAKTLKLIHQ) is removed in mature form.

Proprotein probably interacts with chaperone CsaA. Post-translationally, production of active SDP (able to induce SdpI and kill cells) is a multi-step process that requires signal peptide cleavage (probably by SipS or SipT) as well as SdpA and SdpB. The disulfide bond is not required for maximum toxicity.

It is found in the secreted. In terms of biological role, produces a 42-residue extracellular sporulation delaying protein (SDP) that collapses the proton motive force (probably both the membrane potential and pH gradient) across the cell membrane, which leads to autolysis; may form a proton channel. Induces the lysis of other B.subtilis cells that have not entered the sporulation pathway, inducing cannibalism to provide a source of nutrients to support sporulation, and at the same time delaying commitment to the energetically expensive and irreversible onset of sporulation. Addition of SDP to liquid cultures halts growth, leads to increased cell permeability and eventually cell lysis in a significant subset of the population, although some cells survive and resume growth after a lag period. Effects of SDP are irreversible within 10 minutes. Addition of SDP to solid cultures induces killing, it is much more effective than SKF (AC O31422). Has antibiotic action against Gram-positive Firmicutes (L.acidophilus, M.megaterium, P.polymyxa, S.aureus, S.epidermidis) but not Actinobacteria M.luteus or Gram-negative P.aeruginosa or K.pneumoniae. SDP induces expression of the sdpR-sdpI operon. Its maturation is dependent on SdpA and SdpB. Also functions as a ligand, binds to SdpI triggering a signal transduction cascade that protects the cell against the toxic effects of its own SDP. The sequence is that of Sporulation delaying protein C from Bacillus subtilis (strain 168).